The sequence spans 232 residues: Lipoprotein-releasing system ATP-binding protein LolD (232 aa).

One can recognise an ABC transporter domain in the interval 6 to 231; it reads ISCENLNKVY…KLTIKESQHV (226 aa). An ATP-binding site is contributed by 42 to 49; sequence GSSGSGKS.

Belongs to the ABC transporter superfamily. Lipoprotein translocase (TC 3.A.1.125) family. In terms of assembly, the complex is composed of two ATP-binding proteins (LolD) and two transmembrane proteins (LolC and LolE).

The protein resides in the cell inner membrane. Functionally, part of the ABC transporter complex LolCDE involved in the translocation of mature outer membrane-directed lipoproteins, from the inner membrane to the periplasmic chaperone, LolA. Responsible for the formation of the LolA-lipoprotein complex in an ATP-dependent manner. The protein is Lipoprotein-releasing system ATP-binding protein LolD of Pseudoalteromonas translucida (strain TAC 125).